We begin with the raw amino-acid sequence, 772 residues long: Protein transport protein SEC23 F (772 aa).

Zn(2+) contacts are provided by Cys65, Cys68, Cys87, and Cys90. A zinc finger-like region spans residues 65–90 (CKTCKALLNAFARVDFAAMNWVCPFC).

Belongs to the SEC23/SEC24 family. SEC23 subfamily. Component of the coat protein complex II (COPII), composed of at least five proteins: the Sec23/24 complex, the Sec13/31 complex and Sar1. Interacts with SEC24A.

It localises to the cytoplasmic vesicle. The protein resides in the COPII-coated vesicle membrane. The protein localises to the endoplasmic reticulum membrane. Its subcellular location is the membrane. Functionally, component of the coat protein complex II (COPII) which promotes the formation of transport vesicles from the endoplasmic reticulum (ER). The coat has two main functions, the physical deformation of the endoplasmic reticulum membrane into vesicles and the selection of cargo molecules. The protein is Protein transport protein SEC23 F of Arabidopsis thaliana (Mouse-ear cress).